The primary structure comprises 290 residues: Glycine-N-acyltransferase-like protein 3 (290 aa).

It carries out the reaction an acyl-CoA + glycine = an N-acylglycine + CoA + H(+). The enzyme catalyses (9Z)-octadecenoyl-CoA + glycine = N-(9Z-octadecenoyl)glycine + CoA + H(+). It catalyses the reaction hexadecanoyl-CoA + glycine = N-hexadecanoylglycine + CoA + H(+). It functions in the pathway lipid metabolism. Its function is as follows. Catalyzes the conjugation of long-chain fatty acyl-CoA thioester and glycine to produce long-chain N-(fatty acyl)glycine, an intermediate in the primary fatty acid amide biosynthetic pathway. In Mus musculus (Mouse), this protein is Glycine-N-acyltransferase-like protein 3.